A 444-amino-acid polypeptide reads, in one-letter code: Xylose isomerase (444 aa).

Catalysis depends on residues H101 and D104. Residues E232, E268, H271, D296, D307, D309, and D339 each contribute to the Mg(2+) site.

This sequence belongs to the xylose isomerase family. Homotetramer. Mg(2+) serves as cofactor.

It is found in the cytoplasm. It catalyses the reaction alpha-D-xylose = alpha-D-xylulofuranose. This chain is Xylose isomerase, found in Thermotoga sp. (strain RQ2).